Reading from the N-terminus, the 752-residue chain is Double zinc ribbon and ankyrin repeat-containing protein 1 (752 aa).

Phosphoserine is present on residues serine 160 and serine 182. The interval 164–187 (IPAYGGGSGSRPPTRQSQSPGFAH) is disordered. The segment covering 174–183 (RPPTRQSQSP) has biased composition (polar residues). DZANK-type zinc fingers lie at residues 211–270 (CAHC…CVVC) and 339–387 (CYRC…GSCG). 2 ANK repeats span residues 605–636 (ENRL…DPNC) and 640–669 (DNRP…DIDQ).

As to quaternary structure, interacts with NINL isoform 2. Associates with DYNC1H1 and multiple dynein intermediate and light chains as well as actin-binding proteins.

It localises to the cytoplasm. Its subcellular location is the cytoskeleton. The protein resides in the microtubule organizing center. The protein localises to the centrosome. It is found in the cilium basal body. In terms of biological role, involved in vesicle transport in photoreceptor cells. This is Double zinc ribbon and ankyrin repeat-containing protein 1 from Homo sapiens (Human).